A 141-amino-acid chain; its full sequence is Putative pre-16S rRNA nuclease (141 aa).

The protein belongs to the YqgF nuclease family.

The protein resides in the cytoplasm. In terms of biological role, could be a nuclease involved in processing of the 5'-end of pre-16S rRNA. The polypeptide is Putative pre-16S rRNA nuclease (Histophilus somni (strain 129Pt) (Haemophilus somnus)).